Reading from the N-terminus, the 338-residue chain is Replication factor C subunit 3 (338 aa).

57–64 (GPPGTGKT) serves as a coordination point for ATP.

The protein belongs to the activator 1 small subunits family. Heteropentamer of subunits RFC1, RFC2, RFC3, RFC4 and RFC5 that forms a complex with PCNA in the presence of ATP.

Its subcellular location is the nucleus. The elongation of primed DNA templates by DNA polymerase delta and epsilon requires the action of the accessory proteins proliferating cell nuclear antigen (PCNA) and activator 1. Subunit 3 binds ATP. This chain is Replication factor C subunit 3 (RFC3), found in Blastobotrys adeninivorans (Yeast).